Here is a 538-residue protein sequence, read N- to C-terminus: NADH-quinone oxidoreductase subunit N (538 aa).

14 helical membrane-spanning segments follow: residues 12–32 (IAYG…VSVL), 47–67 (LALA…LSGS), 81–101 (PTLY…VVMA), 144–164 (GITQ…MMLF), 170–190 (LLTM…MCAL), 205–225 (YFLL…FVYG), 248–268 (FLLL…GAVP), 294–314 (IAAF…ITTD), 317–337 (PVLW…AVTQ), 343–363 (MLAY…AAAN), 371–391 (LFYL…AGLV), 423–443 (APVL…IPLT), 472–492 (SAIA…ADPV), and 502–522 (GPAV…LGVA).

The protein belongs to the complex I subunit 2 family. In terms of assembly, NDH-1 is composed of 14 different subunits. Subunits NuoA, H, J, K, L, M, N constitute the membrane sector of the complex.

It is found in the cell membrane. The enzyme catalyses a quinone + NADH + 5 H(+)(in) = a quinol + NAD(+) + 4 H(+)(out). Its function is as follows. NDH-1 shuttles electrons from NADH, via FMN and iron-sulfur (Fe-S) centers, to quinones in the respiratory chain. The immediate electron acceptor for the enzyme in this species is believed to be a menaquinone. Couples the redox reaction to proton translocation (for every two electrons transferred, four hydrogen ions are translocated across the cytoplasmic membrane), and thus conserves the redox energy in a proton gradient. The sequence is that of NADH-quinone oxidoreductase subunit N from Mycobacteroides abscessus (strain ATCC 19977 / DSM 44196 / CCUG 20993 / CIP 104536 / JCM 13569 / NCTC 13031 / TMC 1543 / L948) (Mycobacterium abscessus).